The following is a 70-amino-acid chain: MSQKMTGSVKWFNETKGFGFISQDNGGQDVFVHFKSIVSEGFKTLAEGQRVSFTVEQGKKGPQAAQVTAL.

A CSD domain is found at Gly7–Val67.

The protein localises to the cytoplasm. The polypeptide is Cold shock-like protein CspA (cspA) (Vibrio cholerae serotype O1 (strain ATCC 39315 / El Tor Inaba N16961)).